Reading from the N-terminus, the 301-residue chain is Protoheme IX farnesyltransferase (301 aa).

The next 9 membrane-spanning stretches (helical) occupy residues 16 to 36 (VVALIVFTALVGMFLAIPGMP), 41 to 61 (IQSGALGFLGIWLAAAAAAAI), 93 to 113 (VFAGVLITLSMTILTLWVNLI), 114 to 134 (TAVLTFTSLIGYAVIYTVYLK), 141 to 161 (IVIGGLAGAMPPMLGWAAVTG), 172 to 192 (SLLVAIIFVWTPPHFWALAIF), 217 to 237 (QILLYTVILSVVTLLPVATGM), 238 to 258 (SGVFYLGAALVLDAVFLWYAW), and 273 to 293 (FGYSIVYLMALFAFLMFDHWL).

It belongs to the UbiA prenyltransferase family. Protoheme IX farnesyltransferase subfamily.

The protein resides in the cell inner membrane. It carries out the reaction heme b + (2E,6E)-farnesyl diphosphate + H2O = Fe(II)-heme o + diphosphate. The protein operates within porphyrin-containing compound metabolism; heme O biosynthesis; heme O from protoheme: step 1/1. Functionally, converts heme B (protoheme IX) to heme O by substitution of the vinyl group on carbon 2 of heme B porphyrin ring with a hydroxyethyl farnesyl side group. The chain is Protoheme IX farnesyltransferase from Xylella fastidiosa (strain Temecula1 / ATCC 700964).